The following is a 305-amino-acid chain: Peroxisome assembly protein 26 (305 aa).

The interval 1-20 (MKSDSSTSAAPLRGLGGPLR) is disordered. At 1-246 (MKSDSSTSAA…RQLWDSAVSH (246 aa)) the chain is on the cytoplasmic side. The chain crosses the membrane as a helical; Signal-anchor for type II membrane protein span at residues 247–267 (FFSLPFKKSLLAALILCLLVV). The Peroxisomal matrix segment spans residues 268–305 (RFDPASPSSLHFLYKLAQLFRWIRKAAFSRLYQLRIRD).

The protein belongs to the peroxin-26 family. In terms of assembly, interacts (via its cytoplasmic domain) with PEX6; interaction is direct and is ATP-dependent. Interacts with PEX1; interaction is indirect and is mediated via interaction with PEX6. In terms of tissue distribution, widely expressed. Highly expressed in kidney, liver, brain and skeletal muscles. Expressed at intermediate level in pancreas, placenta and heart. Weakly expressed in lung.

Its subcellular location is the peroxisome membrane. Its function is as follows. Peroxisomal docking factor that anchors PEX1 and PEX6 to peroxisome membranes. PEX26 is therefore required for the formation of the PEX1-PEX6 AAA ATPase complex, a complex that mediates the extraction of the PEX5 receptor from peroxisomal membrane. This chain is Peroxisome assembly protein 26, found in Homo sapiens (Human).